The chain runs to 305 residues: Small ribosomal subunit protein uS3 (305 aa).

One can recognise a KH type-2 domain in the interval 17–86 (IDEFFSEELS…DPQVDVQEVD (70 aa)). Acidic residues-rich tracts occupy residues 207-262 (EPEG…EAET) and 272-305 (AAEEPDEALDEDVEAEAEELLDEMEDETTDEEET). Positions 207-305 (EPEGDVEELL…EDETTDEEET (99 aa)) are disordered.

The protein belongs to the universal ribosomal protein uS3 family. As to quaternary structure, part of the 30S ribosomal subunit.

Binds the lower part of the 30S subunit head. The chain is Small ribosomal subunit protein uS3 from Natronomonas pharaonis (strain ATCC 35678 / DSM 2160 / CIP 103997 / JCM 8858 / NBRC 14720 / NCIMB 2260 / Gabara) (Halobacterium pharaonis).